Consider the following 662-residue polypeptide: Junctophilin-1 (662 aa).

At 1–640 the chain is on the cytoplasmic side; that stretch reads MTGGRFDFDD…EREANSGPNS (640 aa). MORN repeat units follow at residues 14-36, 38-59, 60-82, 106-128, and 129-151; these read YCGG…KGQG, YSGS…SGNT, YQGY…KWMY, YEGT…DGGT, and YQGQ…PYGM. Residues serine 157, serine 216, and serine 220 each carry the phosphoserine modification. The interval 228 to 247 is disordered; that stretch reads SKSSISSKRSSVRSDAAMSR. MORN repeat units follow at residues 281-303 and 304-326; these read YMGE…NGMK and YEGE…DGSK. Residues 432–443 are compositionally biased toward basic and acidic residues; the sequence is VDAKENPEEKVP. The interval 432 to 634 is disordered; it reads VDAKENPEEK…DSCPSMEREA (203 aa). The residue at position 448 (threonine 448) is a Phosphothreonine. Residue serine 452 is modified to Phosphoserine. The residue at position 461 (threonine 461) is a Phosphothreonine. Residues serine 465, serine 469, and serine 475 each carry the phosphoserine modification. Residues 584-599 are compositionally biased toward low complexity; sequence KPSPNKWSPPKSVTKP. Residues 600 to 614 show a composition bias toward basic and acidic residues; that stretch reads VAKESKAEPKAKKSE. A helical; Anchor for type IV membrane protein membrane pass occupies residues 641–661; that stretch reads VMIVLVMLLNIGLAILFVHFL.

This sequence belongs to the junctophilin family.

It is found in the cell membrane. The protein localises to the endoplasmic reticulum membrane. The protein resides in the sarcoplasmic reticulum membrane. Junctophilins contribute to the formation of junctional membrane complexes (JMCs) which link the plasma membrane with the endoplasmic or sarcoplasmic reticulum in excitable cells. Provides a structural foundation for functional cross-talk between the cell surface and intracellular calcium release channels. JPH1 contributes to the construction of the skeletal muscle triad by linking the t-tubule (transverse-tubule) and SR (sarcoplasmic reticulum) membranes. This is Junctophilin-1 (JPH1) from Oryctolagus cuniculus (Rabbit).